Reading from the N-terminus, the 263-residue chain is Probable ribosomal RNA small subunit methyltransferase A (263 aa).

The S-adenosyl-L-methionine site is built by Leu-12, Gly-37, Glu-58, Asp-83, and Asn-100.

It belongs to the class I-like SAM-binding methyltransferase superfamily. rRNA adenine N(6)-methyltransferase family. RsmA subfamily.

The protein localises to the cytoplasm. Its function is as follows. Specifically dimethylates two adjacent adenosines in the loop of a conserved hairpin near the 3'-end of 16S rRNA in the 30S particle. May play a critical role in biogenesis of 30S subunits. The protein is Probable ribosomal RNA small subunit methyltransferase A of Methanococcus maripaludis (strain C6 / ATCC BAA-1332).